The primary structure comprises 676 residues: MEGLSLLQLPRDKFRKSSFFVWVIILFQKAFSMPLGVVTNSTLEVTEIDQLVCKDHLASTDQLKSVGLNLEGSGVSTDIPSATKRWGFRSGVPPQVVSYEAGEWAENCYNLEIKKPDGSECLPPPPDGVRGFPRCRYVHKAQGTGPCPGDYAFHKDGAFFLYDRLASTVIYRGVNFAEGVIAFLILAKPKETFLQSPPIREAANYTENTSSYYATSYLEYEIENFGAQHSTTLFKINNNTFVLLDRPHTPQFLFQLNDTIQLHQQLSNTTGKLIWTLDANINADIGEWAFWENKKNLSEQLRGEELSFETLSLNETEDDDATSSRTTKGRISDRATRKYSDLVPKDSPGMVSLHVPEGETTLPSQNSTEGRRVDVNTQETITETTATIIGTNGNNMQISTIGTGLSSSQILSSSPTMAPSPETQTSTTYTPKLPVMTTEEPTTPPRNSPGSTTEAPTLTTPENITTAVKTVWAQESTSNGLITSTVTGILGSLGLRKRSRRQVNTRATGKCNPNLHYWTAQEQHNAAGIAWIPYFGPGAEGIYTEGLMHNQNALVCGLRQLANETTQALQLFLRATTELRTYTILNRKAIDFLLRRWGGTCRILGPDCCIEPHDWTKNITDKINQIIHDFIDNPLPNQDNDDNWWTGWRQWIPAGIGITGIIIAIIALLCVCKLLC.

The N-terminal stretch at 1 to 32 (MEGLSLLQLPRDKFRKSSFFVWVIILFQKAFS) is a signal peptide. The Extracellular segment spans residues 33 to 650 (MPLGVVTNST…DDNWWTGWRQ (618 aa)). Asn-40 carries an N-linked (GlcNAc...) asparagine; by host glycan. Cystine bridges form between Cys-53/Cys-609, Cys-108/Cys-135, Cys-121/Cys-147, Cys-511/Cys-556, and Cys-601/Cys-608. Residues 54–201 (KDHLASTDQL…TFLQSPPIRE (148 aa)) form a receptor-binding region. 7 N-linked (GlcNAc...) asparagine; by host glycosylation sites follow: Asn-204, Asn-208, Asn-238, Asn-257, Asn-268, Asn-296, and Asn-314. The tract at residues 305–485 (ELSFETLSLN…STSNGLITST (181 aa)) is mucin-like region. The segment at 312–351 (SLNETEDDDATSSRTTKGRISDRATRKYSDLVPKDSPGMV) is disordered. The segment covering 330–344 (RISDRATRKYSDLVP) has biased composition (basic and acidic residues). A glycan (N-linked (GlcNAc...) asparagine; by host) is linked at Asn-366. Residues 406–458 (SSSQILSSSPTMAPSPETQTSTTYTPKLPVMTTEEPTTPPRNSPGSTTEAPTL) are disordered. Polar residues-rich tracts occupy residues 415–430 (PTMA…TTYT) and 448–458 (SPGSTTEAPTL). An N-linked (GlcNAc...) asparagine; by host glycan is attached at Asn-463. The interval 524–539 (HNAAGIAWIPYFGPGA) is fusion peptide. A coiled-coil region spans residues 554–595 (LVCGLRQLANETTQALQLFLRATTELRTYTILNRKAIDFLLR). N-linked (GlcNAc...) asparagine; by host glycosylation occurs at Asn-563. Residues 615–634 (WTKNITDKINQIIHDFIDNP) are a coiled coil. Asn-618 carries N-linked (GlcNAc...) asparagine; by host glycosylation. The chain crosses the membrane as a helical span at residues 651 to 671 (WIPAGIGITGIIIAIIALLCV). Residues Cys-670 and Cys-672 are each lipidated (S-palmitoyl cysteine; by host). At 672 to 676 (CKLLC) the chain is on the cytoplasmic side.

The protein belongs to the filoviruses glycoprotein family. Homotrimer; each monomer consists of a GP1 and a GP2 subunit linked by disulfide bonds. The resulting peplomers (GP1,2) protrude from the virus surface as spikes. Interacts with host integrin alpha-V/ITGAV. Interacts with host CLEC10A. Binds also to host CD209 and CLEC4M/DC-SIGN(R). Interacts with host FOLR1. Interacts with BST2; this interaction inhibits the antiviral effect of BST2 and this allows viral release from infected cells. Interacts with host FCN1; this interaction enhances viral entry. Interacts with host TLR4; this interaction induces cell death in T-lymphocytes or proinflammatory cytokines and SOCS1 production in monocytes. In terms of assembly, interacts with host entry receptor NPC1. As to quaternary structure, GP1 and GP2delta are part of GP1,2delta soluble complexes released by ectodomain shedding. In terms of processing, the signal peptide region modulates GP's high mannose glycosylation, thereby determining the efficiency of the interactions with DC-SIGN(R). N-glycosylated. Post-translationally, O-glycosylated in the mucin-like region. In terms of processing, palmitoylation of GP2 is not required for its function. Specific enzymatic cleavages in vivo yield mature proteins. The precursor is processed into GP1 and GP2 by host cell furin in the trans Golgi, and maybe by other host proteases, to yield the mature GP1 and GP2 proteins. The cleavage site corresponds to the furin optimal cleavage sequence [KR]-X-[KR]-R. This cleavage does not seem to be required for function. After the internalization of the virus into cell endosomes, GP1 C-terminus is removed by the endosomal proteases cathepsin B, cathepsin L, or both, leaving a 19-kDa N-terminal fragment which is further digested by cathepsin B. Proteolytic processing of GP1,2 by host ADAM17 can remove the transmembrane anchor of GP2 and leads to shedding of complexes consisting in GP1 and truncated GP2 (GP1,2delta).

It localises to the virion membrane. The protein resides in the host cell membrane. Its subcellular location is the secreted. Its function is as follows. Trimeric GP1,2 complexes form the virion surface spikes and mediate the viral entry processes, with GP1 acting as the receptor-binding subunit and GP2 as the membrane fusion subunit. At later times of infection, down-regulates the expression of various host cell surface molecules that are essential for immune surveillance and cell adhesion. Down-modulates several integrins including ITGA1, ITGA2, ITGA3, ITGA4, ITGA5, ITGA6, ITGAV and ITGB1. This decrease in cell adhesion molecules may lead to cell detachment, contributing to the disruption of blood vessel integrity and hemorrhages developed during infection (cytotoxicity). Interacts with host TLR4 and thereby stimulates the differentiation and activation of monocytes leading to bystander death of T-lymphocytes. Down-regulates as well the function of host natural killer cells. Counteracts the antiviral effect of host BST2/tetherin that restricts release of progeny virions from infected cells. However, cooperates with VP40 and host BST2 to activate canonical NF-kappa-B pathway in a manner dependent on neddylation. In terms of biological role, functions as a decoy for anti-GP1,2 antibodies thereby contributing to viral immune evasion. Interacts and activates host macrophages and dendritic cells inducing up-regulation of cytokine transcription. This effect is mediated throught activation of host TLR4. Functionally, responsible for binding to the receptor(s) on target cells. Interacts with CD209/DC-SIGN and CLEC4M/DC-SIGNR which act as cofactors for virus entry into dendritic cells (DCs) and endothelial cells. Binding to the macrophage specific lectin CLEC10A also seems to enhance virus infectivity. Interaction with FOLR1/folate receptor alpha may be a cofactor for virus entry in some cell types, although results are contradictory. Members of the Tyro3 receptor tyrosine kinase family also seem to be cell entry factors in filovirus infection. Once attached, the virions are internalized through clathrin-dependent endocytosis and/or macropinocytosis. After internalization of the virus into the endosomes of the host cell, proteolysis of GP1 by two cysteine proteases, CTSB/cathepsin B and CTSL/cathepsin L removes the glycan cap and allows GP1 binding to the host entry receptor NPC1. NPC1-binding, Ca(2+) and acidic pH induce a conformational change of GP2, which unmasks its fusion peptide and permit membranes fusion. Acts as a class I viral fusion protein. Under the current model, the protein has at least 3 conformational states: pre-fusion native state, pre-hairpin intermediate state, and post-fusion hairpin state. During viral and target cell membrane fusion, the coiled coil regions (heptad repeats) assume a trimer-of-hairpins structure, positioning the fusion peptide in close proximity to the C-terminal region of the ectodomain. The formation of this structure appears to drive apposition and subsequent fusion of viral and target cell membranes. Responsible for penetration of the virus into the cell cytoplasm by mediating the fusion of the membrane of the endocytosed virus particle with the endosomal membrane. Low pH in endosomes induces an irreversible conformational change in GP2, releasing the fusion hydrophobic peptide. This Sudan ebolavirus (strain Maleo-79) (SEBOV) protein is Envelope glycoprotein (GP).